The primary structure comprises 140 residues: L-fucose mutarotase (140 aa).

Residue histidine 22 is the Proton donor of the active site. Residues aspartate 30, arginine 107, and 129–131 (YGN) contribute to the substrate site.

The protein belongs to the RbsD / FucU family. FucU mutarotase subfamily. Homodecamer.

It localises to the cytoplasm. The catalysed reaction is alpha-L-fucose = beta-L-fucose. It functions in the pathway carbohydrate metabolism; L-fucose metabolism. Its function is as follows. Involved in the anomeric conversion of L-fucose. The polypeptide is L-fucose mutarotase (Shigella boydii serotype 18 (strain CDC 3083-94 / BS512)).